Reading from the N-terminus, the 308-residue chain is Pseudouridine-5'-phosphate glycosidase (308 aa).

Glu-28 (proton donor) is an active-site residue. Lys-89 and Val-109 together coordinate substrate. Residue Asp-141 coordinates Mn(2+). 143–145 (SAD) provides a ligand contact to substrate. Residue Lys-162 is the Nucleophile of the active site.

This sequence belongs to the pseudouridine-5'-phosphate glycosidase family. Homotrimer. Mn(2+) is required as a cofactor.

It carries out the reaction D-ribose 5-phosphate + uracil = psi-UMP + H2O. Its function is as follows. Catalyzes the reversible cleavage of pseudouridine 5'-phosphate (PsiMP) to ribose 5-phosphate and uracil. Functions biologically in the cleavage direction, as part of a pseudouridine degradation pathway. This Brachyspira hyodysenteriae (strain ATCC 49526 / WA1) protein is Pseudouridine-5'-phosphate glycosidase.